The sequence spans 381 residues: Putative 8-amino-7-oxononanoate synthase (381 aa).

Residue arginine 20 participates in substrate binding. A pyridoxal 5'-phosphate-binding site is contributed by 107 to 108; sequence GY. Histidine 132 contributes to the substrate binding site. Pyridoxal 5'-phosphate-binding positions include serine 180, 205–208, and 236–239; these read DEAH and TLSK. At lysine 239 the chain carries N6-(pyridoxal phosphate)lysine. Residue threonine 351 coordinates substrate.

This sequence belongs to the class-II pyridoxal-phosphate-dependent aminotransferase family. BioF subfamily. As to quaternary structure, homodimer. It depends on pyridoxal 5'-phosphate as a cofactor.

The enzyme catalyses 6-carboxyhexanoyl-[ACP] + L-alanine + H(+) = (8S)-8-amino-7-oxononanoate + holo-[ACP] + CO2. The protein operates within cofactor biosynthesis; biotin biosynthesis. Its function is as follows. Catalyzes the decarboxylative condensation of pimeloyl-[acyl-carrier protein] and L-alanine to produce 8-amino-7-oxononanoate (AON), [acyl-carrier protein], and carbon dioxide. This chain is Putative 8-amino-7-oxononanoate synthase (bioF), found in Rippkaea orientalis (strain PCC 8801 / RF-1) (Cyanothece sp. (strain PCC 8801)).